We begin with the raw amino-acid sequence, 283 residues long: Circadian clock oscillator protein KaiA (283 aa).

The segment at Met-1–Ser-146 is psR domain, not required to form KaiA:KaiB:KaiC complex, or for a full KaiC phosphorylation cycle. The KaiA N-terminal domain maps to Gln-3–Leu-163. A flexible linker region spans residues Gly-164–Arg-172. The KaiA C-terminal domain maps to Asp-173 to Arg-281.

The protein belongs to the KaiA family. Homodimer. The KaiABC complex composition changes during the circadian cycle to control KaiC phosphorylation. Complexes KaiC(6), KaiA(2-4):KaiC(6), KaiB(6):KaiC(6) and KaiC(6):KaiB(6):KaiA(12) are among the most important forms, many form cooperatively. Binds to KaiB and KaiC, the N-terminus (pseudoreceiver domain PsR) is not required for either interaction. 1 KaiB binds to one subunit of the KaiA homodimer. KaiA and CikA bind to the same region of the KaiB(fs) form and therefore compete.

Its function is as follows. Key component of the KaiABC oscillator complex, which constitutes the main circadian regulator in cyanobacteria. Complex composition changes during the circadian cycle to control KaiC phosphorylation. KaiA stimulates KaiC autophosphorylation, while KaiB sequesters KaiA, leading to KaiC autodephosphorylation. KaiA binding to the KaiC CII domain during the subjective day yields KaiA(2-4):KaiC(6) complexes which stimulate KaiC autophosphorylation. Phospho-Ser-431 KaiC accumulation triggers binding of KaiB during the subjective night to form the KaiB(6):KaiC(6) complex, leading to changes in the output regulators CikA and SasA. KaiB(6):KaiC(6) formation exposes a site for KaiA binding on KaiB that sequesters KaiA from KaiC's CII domain, making the KaiC(6):KaiB(6):KaiA(12) complex resulting in KaiC autodephosphorylation. Complete dephosphorylation of KaiC leads to dissociation of KaiA(2):KaiB(1), completing 1 cycle of the Kai oscillator. Formation of the KaiB:KaiC complex is promoted by KaiA, helping switch KaiC from its autophosphorylation to autodephosphatase function. Functionally, binds oxidized quinones via the N-terminal PsR domain, allowing it to sense redox changes and possibly mediate clock input. This Thermosynechococcus vestitus (strain NIES-2133 / IAM M-273 / BP-1) protein is Circadian clock oscillator protein KaiA.